Here is a 107-residue protein sequence, read N- to C-terminus: Iron-binding protein IscA (107 aa).

Positions 35, 99, and 101 each coordinate Fe cation.

This sequence belongs to the HesB/IscA family. Homodimer; may form tetramers and higher multimers. The cofactor is Fe cation.

Its function is as follows. Is able to transfer iron-sulfur clusters to apo-ferredoxin. Multiple cycles of [2Fe2S] cluster formation and transfer are observed, suggesting that IscA acts catalytically. Recruits intracellular free iron so as to provide iron for the assembly of transient iron-sulfur cluster in IscU in the presence of IscS, L-cysteine and the thioredoxin reductase system TrxA/TrxB. The sequence is that of Iron-binding protein IscA from Klebsiella pneumoniae subsp. pneumoniae (strain ATCC 700721 / MGH 78578).